A 263-amino-acid chain; its full sequence is Glycerol uptake facilitator protein (263 aa).

Residues 1–7 (MNIYRKK) lie on the Cytoplasmic side of the membrane. Residues 8–36 (NIIKKCFMEFFGTGLVMFFGIGCLAASKL) traverse the membrane as a helical segment. Over 37-41 (TNANF) the chain is Extracellular. Residues 42–62 (TQFEISCIWGFGVSIAIYFSS) form a helical membrane-spanning segment. Over 63–65 (SIS) the chain is Cytoplasmic. The stretch at 66 to 69 (GAHL) is an intramembrane region. An NPA 1 motif is present at residues 70–72 (NPA). Residues 70 to 80 (NPAVTIFFWLS) constitute an intramembrane region (helical). Topologically, residues 81–86 (SKLNKR) are cytoplasmic. A helical transmembrane segment spans residues 87-110 (KVLPYIISQTLGSFFFTMLTYYLY). Residues 111 to 145 (NNLLISFERNNNVVRGTQESLNLASIFCVYPNYNN) lie on the Extracellular side of the membrane. Residues 146–171 (SFIYDFIIEIFSTALFILIVLEFNNR) form a helical membrane-spanning segment. Over 172 to 181 (NSNYFLYNRS) the chain is Cytoplasmic. The chain crosses the membrane as a helical span at residues 182 to 198 (VAPILTGFLVCMINLVI). At 199–202 (NPLN) the chain is on the extracellular side. The stretch at 203 to 206 (NISL) is an intramembrane region. The NPA 2 motif lies at 207–209 (NPA). Residues 207 to 220 (NPARDLGPKILLSL) constitute an intramembrane region (helical). Residues 221-236 (TGWGLFSFTGGNDNIL) lie on the Extracellular side of the membrane. A helical membrane pass occupies residues 237–259 (YCFIPIMGPILGANLGGWIHKTL). The Cytoplasmic segment spans residues 260–263 (INNS).

Belongs to the MIP/aquaporin (TC 1.A.8) family.

The protein localises to the cell membrane. The catalysed reaction is glycerol(in) = glycerol(out). Its function is as follows. Mediates glycerol diffusion across the cytoplasmic membrane via a pore-type mechanism. The chain is Glycerol uptake facilitator protein (glpF) from Buchnera aphidicola subsp. Acyrthosiphon pisum (strain APS) (Acyrthosiphon pisum symbiotic bacterium).